The sequence spans 337 residues: MIEQDRIISAELKGNDRQVDRAIRPQALAEYIGQPVVREQMEIFIQAARQRGEPLDHTLIFGPPGLGKTTLANIIGNEMGAEVRTTSGPVLERAGDLAALLTNLNEGDILFIDEIHRLSPAIEEVLYPAMEDYQLDIMIGEGPAARSIKIELPPFTLVGATTRAGLLTSPLRDRFGIVQRLEFYDVESLTTIVARSAGKMGVELDQSGCFEVARRSRGTPRIANRLLRRVRDVAQVSGEVLVGQKVAQRALDMLSVDSQGFDHLDRRMLLTMIEKFDGRPVGLDSVSAALGEDKDTIEDVIEPFLIQQGFIIRTPRGRQVTKRAYEHFNYQLPSDFK.

The interval 4-184 (QDRIISAELK…FGIVQRLEFY (181 aa)) is large ATPase domain (RuvB-L). Residues I23, R24, G65, K68, T69, T70, 131 to 133 (EDY), R174, Y184, and R221 contribute to the ATP site. A Mg(2+)-binding site is contributed by T69. Residues 185 to 255 (DVESLTTIVA…VAQRALDMLS (71 aa)) are small ATPAse domain (RuvB-S). The tract at residues 258 to 337 (SQGFDHLDRR…FNYQLPSDFK (80 aa)) is head domain (RuvB-H). 2 residues coordinate DNA: R313 and R318.

Belongs to the RuvB family. As to quaternary structure, homohexamer. Forms an RuvA(8)-RuvB(12)-Holliday junction (HJ) complex. HJ DNA is sandwiched between 2 RuvA tetramers; dsDNA enters through RuvA and exits via RuvB. An RuvB hexamer assembles on each DNA strand where it exits the tetramer. Each RuvB hexamer is contacted by two RuvA subunits (via domain III) on 2 adjacent RuvB subunits; this complex drives branch migration. In the full resolvosome a probable DNA-RuvA(4)-RuvB(12)-RuvC(2) complex forms which resolves the HJ.

The protein localises to the cytoplasm. The enzyme catalyses ATP + H2O = ADP + phosphate + H(+). The RuvA-RuvB-RuvC complex processes Holliday junction (HJ) DNA during genetic recombination and DNA repair, while the RuvA-RuvB complex plays an important role in the rescue of blocked DNA replication forks via replication fork reversal (RFR). RuvA specifically binds to HJ cruciform DNA, conferring on it an open structure. The RuvB hexamer acts as an ATP-dependent pump, pulling dsDNA into and through the RuvAB complex. RuvB forms 2 homohexamers on either side of HJ DNA bound by 1 or 2 RuvA tetramers; 4 subunits per hexamer contact DNA at a time. Coordinated motions by a converter formed by DNA-disengaged RuvB subunits stimulates ATP hydrolysis and nucleotide exchange. Immobilization of the converter enables RuvB to convert the ATP-contained energy into a lever motion, pulling 2 nucleotides of DNA out of the RuvA tetramer per ATP hydrolyzed, thus driving DNA branch migration. The RuvB motors rotate together with the DNA substrate, which together with the progressing nucleotide cycle form the mechanistic basis for DNA recombination by continuous HJ branch migration. Branch migration allows RuvC to scan DNA until it finds its consensus sequence, where it cleaves and resolves cruciform DNA. This is Holliday junction branch migration complex subunit RuvB from Marinomonas sp. (strain MWYL1).